The sequence spans 329 residues: MTLRNDWTREEIQALYEQPFLDLVFKAQQVHREHFTANTIQVSTLLSIKTGKCPEDCKYCSQSAHYDSKLEAEKRIAVEKVISEAKAAKDSGSSRFCMGAAWRNPHERDMPYVLEMVREVKALGMETCMTLGMLNQSQAERLKDAGLDYYNHNLDTSREYYSHIISTRTFDDRLNTLDYVRQAGMKVCSGGIVGLGESREDRIGLLHELATLPIHPESVPINMLVPIEGTPLADVEKLDVIEWIRTIAVARIIMPHSYIRLSAGRESLSDSDQALAFMAGANSLFSGDKLLTTPNAGEGKDQALFNKLGLTAEKPKPTVSDLSVDAMSA.

Residues 38 to 262 (NTIQVSTLLS…IMPHSYIRLS (225 aa)) form the Radical SAM core domain. The [4Fe-4S] cluster site is built by Cys-53, Cys-57, and Cys-60. The [2Fe-2S] cluster site is built by Cys-97, Cys-128, Cys-188, and Arg-260.

The protein belongs to the radical SAM superfamily. Biotin synthase family. As to quaternary structure, homodimer. [4Fe-4S] cluster is required as a cofactor. The cofactor is [2Fe-2S] cluster.

The catalysed reaction is (4R,5S)-dethiobiotin + (sulfur carrier)-SH + 2 reduced [2Fe-2S]-[ferredoxin] + 2 S-adenosyl-L-methionine = (sulfur carrier)-H + biotin + 2 5'-deoxyadenosine + 2 L-methionine + 2 oxidized [2Fe-2S]-[ferredoxin]. It participates in cofactor biosynthesis; biotin biosynthesis; biotin from 7,8-diaminononanoate: step 2/2. Catalyzes the conversion of dethiobiotin (DTB) to biotin by the insertion of a sulfur atom into dethiobiotin via a radical-based mechanism. The polypeptide is Biotin synthase (Acinetobacter baumannii (strain ACICU)).